Consider the following 154-residue polypeptide: Ubiquitin-like protein 4A-A (154 aa).

A Ubiquitin-like domain is found at 1 to 76 (MILTVKPLQG…LNLVVRPAGE (76 aa)).

As to quaternary structure, component of the BAT3 complex.

It is found in the cytoplasm. The protein resides in the cytosol. Its function is as follows. Component of the BAT3 complex, a multiprotein complex involved in the post-translational delivery of tail-anchored (TA) membrane proteins to the endoplasmic reticulum membrane. TA membrane proteins, also named type II transmembrane proteins, contain a single C-terminal transmembrane region. The sequence is that of Ubiquitin-like protein 4A-A (ubl4aa) from Salmo salar (Atlantic salmon).